A 411-amino-acid chain; its full sequence is Chorismate synthase (411 aa).

2 residues coordinate NADP(+): Arg-40 and Arg-46. FMN is bound by residues 135–137 and 256–257; these read RAS and QA. Residues 278 to 299 form a disordered region; the sequence is HDGIARGADGRPRRTSDRAGGI. Residues 285–294 are compositionally biased toward basic and acidic residues; that stretch reads ADGRPRRTSD. FMN contacts are provided by residues Ala-301, 316–320, and Arg-342; that span reads KPIAT.

The protein belongs to the chorismate synthase family. In terms of assembly, homotetramer. The cofactor is FMNH2.

The catalysed reaction is 5-O-(1-carboxyvinyl)-3-phosphoshikimate = chorismate + phosphate. The protein operates within metabolic intermediate biosynthesis; chorismate biosynthesis; chorismate from D-erythrose 4-phosphate and phosphoenolpyruvate: step 7/7. Catalyzes the anti-1,4-elimination of the C-3 phosphate and the C-6 proR hydrogen from 5-enolpyruvylshikimate-3-phosphate (EPSP) to yield chorismate, which is the branch point compound that serves as the starting substrate for the three terminal pathways of aromatic amino acid biosynthesis. This reaction introduces a second double bond into the aromatic ring system. The chain is Chorismate synthase from Micrococcus luteus (strain ATCC 4698 / DSM 20030 / JCM 1464 / CCM 169 / CCUG 5858 / IAM 1056 / NBRC 3333 / NCIMB 9278 / NCTC 2665 / VKM Ac-2230) (Micrococcus lysodeikticus).